The primary structure comprises 170 residues: Flavodoxin (170 aa).

Positions 4 to 165 constitute a Flavodoxin-like domain; sequence IGLFYGTQTG…RIKTWVSQLK (162 aa).

This sequence belongs to the flavodoxin family. FMN serves as cofactor.

Functionally, low-potential electron donor to a number of redox enzymes. In Synechococcus elongatus (strain ATCC 33912 / PCC 7942 / FACHB-805) (Anacystis nidulans R2), this protein is Flavodoxin (isiB).